The chain runs to 2543 residues: Highly reducing polyketide synthase GPY1 (2543 aa).

In terms of domain architecture, Ketosynthase family 3 (KS3) spans 9–435 (REPIAIVSMA…GSTAHAVVEF (427 aa)). Residues C182, H318, and H358 each act as for beta-ketoacyl synthase activity in the active site. Residues 574 to 881 (TFTGQGAMWS…PFFATMLRNA (308 aa)) form a malonyl-CoA:ACP transacylase (MAT) domain region. Residues 953–1089 (HEILGSRCRG…GRAAVLETSK (137 aa)) are N-terminal hotdog fold. Positions 953-1253 (HEILGSRCRG…GLQMDRATSD (301 aa)) are dehydratase (DH) domain. The region spanning 953-1256 (HEILGSRCRG…MDRATSDDNT (304 aa)) is the PKS/mFAS DH domain. The Proton acceptor; for dehydratase activity role is filled by H985. The C-terminal hotdog fold stretch occupies residues 1103–1256 (MPLKVPLKSY…MDRATSDDNT (154 aa)). Catalysis depends on D1169, which acts as the Proton donor; for dehydratase activity. The segment at 1399–1587 (NDLLYRFYEE…LDEWRNELAA (189 aa)) is methyltransferase (CMet) domain. The segment at 1830-2136 (GILESLTMAQ…IEGTSNKQVV (307 aa)) is enoyl reductase (ER) domain. The ketoreductase (KR) domain stretch occupies residues 2161-2335 (TYIITGGLGG…ASSVDLGFVE (175 aa)). The Carrier domain occupies 2464–2541 (ALQPFVCTAL…DLSARVSRMI (78 aa)). O-(pantetheine 4'-phosphoryl)serine is present on S2501.

Highly reducing polyketide synthase; part of the gene cluster that mediates the biosynthesis of gibepyrone A, a 2H-pyran-2-one metabolite exhibiting a moderate antimicrobial activity against Gram-positive bacteria and yeasts. The highly reducing polyketide synthase GPY1 is sufficient to produce gibepyrone A. GPY1 uses an acetyl-CoA starter unit, three malonyl-CoA extender units, and two SAM-dependent methylations to establish the gibepyrone A carbon backbone, followed by product release upon intramolecular cyclization. The gibepyrone A derivatives gibepyrones B and D are produced by cluster-independent P450 monooxygenases, probably to protect the fungus from the toxic product. In contrast, the formation of gibepyrones E and F from gibepyrone A is a spontaneous process and independent of enzymatic activity. This Gibberella fujikuroi (strain CBS 195.34 / IMI 58289 / NRRL A-6831) (Bakanae and foot rot disease fungus) protein is Highly reducing polyketide synthase GPY1.